Consider the following 101-residue polypeptide: Chaperone modulatory protein CbpM (101 aa).

Belongs to the CbpM family.

Its function is as follows. Interacts with CbpA and inhibits both the DnaJ-like co-chaperone activity and the DNA binding activity of CbpA. Together with CbpA, modulates the activity of the DnaK chaperone system. Does not inhibit the co-chaperone activity of DnaJ. The chain is Chaperone modulatory protein CbpM from Escherichia coli (strain K12 / MC4100 / BW2952).